Reading from the N-terminus, the 658-residue chain is Alkyldihydroxyacetonephosphate synthase, peroxisomal (658 aa).

The segment covering 1–24 (MAEAAAAAAAAAAAGETSASSGSA) has biased composition (low complexity). The interval 1–37 (MAEAAAAAAAAAAAGETSASSGSAAERDPDQDRAGRR) is disordered. Residues 1 to 58 (MAEAAAAAAAAAAAGETSASSGSAAERDPDQDRAGRRLRVLSGHLLGRPQEALSTNEC) constitute a peroxisome transit peptide. The span at 25-35 (AERDPDQDRAG) shows a compositional bias: basic and acidic residues. Phosphoserine is present on Ser65. Phosphothreonine is present on Thr74. Lys102 bears the N6-acetyllysine mark. Residues 202 to 384 (FERIPDIVLW…TEATIKIRPT (183 aa)) enclose the FAD-binding PCMH-type domain. FAD contacts are provided by residues 234 to 240 (PIGGGTS), 303 to 309 (DSLEFST), and 316 to 319 (TRAS). The residue at position 347 (Lys347) is an N6-acetyllysine. FAD is bound at residue 368–374 (EGTLGVI). Residue Arg515 participates in substrate binding. Tyr578 acts as the Proton donor/acceptor in catalysis. 2 important for enzyme activity regions span residues 615–617 (HHH) and 654–658 (NRNLL).

Belongs to the FAD-binding oxidoreductase/transferase type 4 family. In terms of assembly, homodimer. FAD is required as a cofactor.

Its subcellular location is the peroxisome membrane. It is found in the peroxisome. It carries out the reaction a long chain fatty alcohol + a 1-acylglycerone 3-phosphate = a 1-O-alkylglycerone 3-phosphate + a long-chain fatty acid + H(+). It catalyses the reaction hexadecan-1-ol + 1-hexadecanoylglycerone 3-phosphate = 1-O-hexadecylglycerone 3-phosphate + hexadecanoate + H(+). The enzyme catalyses 1-hexadecanoylglycerone 3-phosphate + a long-chain fatty acid = a 1-acylglycerone 3-phosphate + hexadecanoate. Its pathway is glycerolipid metabolism; ether lipid biosynthesis. Its activity is regulated as follows. Inhibited by N-ethylmaleimide, p-bromophenacylbromide, 2,4- dinitrofluorobenzene and divalent cations such as such as Mn(2+), Mg(2+) and Zn(2+). Inhibition by p-bromophenacylbromide is strongly pH dependent and is highest at alkaline conditions. In terms of biological role, catalyzes the exchange of the acyl chain in acyl-dihydroxyacetonephosphate (acyl-DHAP) for a long chain fatty alcohol, yielding the first ether linked intermediate, i.e. alkyl-dihydroxyacetonephosphate (alkyl-DHAP), in the pathway of ether lipid biosynthesis. The chain is Alkyldihydroxyacetonephosphate synthase, peroxisomal (AGPS) from Cavia porcellus (Guinea pig).